A 112-amino-acid polypeptide reads, in one-letter code: DIVMTQAAFSNPVTLGTSASFSCRSSKSLQQSKGITYLYWYLQKPGQSPQLLIYQMSNLASGVPDRFSGSGSGTDFTLRISRVEAEDVGVYYCANLQELPYTFGGGTKLEIK.

The segment at 1 to 23 (DIVMTQAAFSNPVTLGTSASFSC) is framework-1. A disulfide bridge connects residues cysteine 23 and cysteine 93. The segment at 24–39 (RSSKSLQQSKGITYLY) is complementarity-determining-1. A framework-2 region spans residues 40–54 (WYLQKPGQSPQLLIY). The interval 55–61 (QMSNLAS) is complementarity-determining-2. The interval 62-93 (GVPDRFSGSGSGTDFTLRISRVEAEDVGVYYC) is framework-3. Residues 94-102 (ANLQELPYT) form a complementarity-determining-3 region. A framework-4 region spans residues 103–112 (FGGGTKLEIK).

In Mus musculus (Mouse), this protein is Ig kappa chain V-II region 2S1.3.